The chain runs to 120 residues: MKILFVLISILYAVYCFSSEEDVDSAYLANELEPVEDINSEQYAALEPKEEQERSCAGMGRDCKDDCDCCLNIATCNCWFGRYFCSCTFGDYQTCLRKKGKCKRNRPQSCPRSNLNRKKG.

An N-terminal signal peptide occupies residues 1-16; sequence MKILFVLISILYAVYC. The propeptide occupies 17–54; that stretch reads FSSEEDVDSAYLANELEPVEDINSEQYAALEPKEEQER. Disulfide bonds link Cys56–Cys70, Cys63–Cys76, Cys69–Cys87, and Cys78–Cys85. The 40-residue stretch at 56-95 folds into the Agouti domain; the sequence is CAGMGRDCKDDCDCCLNIATCNCWFGRYFCSCTFGDYQTC.

It belongs to the neurotoxin 05 (agouti) family. In terms of processing, contains 6 disulfide bonds. Expressed by the venom gland.

The protein resides in the secreted. This chain is U13-lycotoxin-Ls1e, found in Lycosa singoriensis (Wolf spider).